The following is a 505-amino-acid chain: Retinoic acid receptor gamma (505 aa).

2 disordered regions span residues 1–57 and 113–134; these read MMKF…SSKD and SLSV…PSPP. 2 stretches are compositionally biased toward basic and acidic residues: residues 12-22 and 32-46; these read DGGERPEEEGK and MGKE…KEEA. The interval 52–142 is modulating; the sequence is MSSSKDRICS…PPPPPRVYKP (91 aa). Polar residues predominate over residues 115–124; that stretch reads SVETQSTSSE. 2 consecutive NR C4-type zinc fingers follow at residues 143-163 and 179-203; these read CFVC…CEGC and CHRD…LQKC. Positions 143 to 208 form a DNA-binding region, nuclear receptor; sequence CFVCNDKSSG…RLQKCFEVGM (66 aa). Positions 209–237 are hinge; sequence SKEAVRNDRNKKKKEIKEEVVTDSYEMPP. The region spanning 238–472 is the NR LBD domain; it reads EMEALIQKVS…PLIREMLENP (235 aa). Residues 462–505 are disordered; it reads PPLIREMLENPEAFEDDASPPPKSEQKPIKVEEKPGEKTSTKDP. Basic and acidic residues predominate over residues 485-505; the sequence is SEQKPIKVEEKPGEKTSTKDP.

Belongs to the nuclear hormone receptor family. NR1 subfamily. In terms of assembly, heterodimer; with a RXR molecule. Binds DNA preferentially as a RAR/RXR heterodimer. As to expression, isoform Delta-1A and Isoform Delta-1B are most abundant in regenerating limbs, tails, and the anterior half of the lower jaw. Isoform Delta-2 is broadly and uniformly distributed.

Its subcellular location is the nucleus. Receptor for retinoic acid. Retinoic acid receptors bind as heterodimers to their target response elements in response to their ligands, all-trans or 9-cis retinoic acid, and regulate gene expression in various biological processes. The RAR/RXR heterodimers bind to the retinoic acid response elements (RARE) composed of tandem 5'-AGGTCA-3' sites known as DR1-DR5. This is Retinoic acid receptor gamma (RARG) from Notophthalmus viridescens (Eastern newt).